Here is a 1384-residue protein sequence, read N- to C-terminus: Hepatocyte growth factor receptor (1384 aa).

The first 24 residues, 1 to 24 (MKAPAVLAPGILVLLFTFVQKSNG), serve as a signal peptide directing secretion. The Extracellular segment spans residues 25–933 (ECKEALVKSR…VIVQPDQNFT (909 aa)). One can recognise a Sema domain in the interval 27–516 (KEALVKSRMN…TGKKITKIPL (490 aa)). N-linked (GlcNAc...) asparagine glycosylation occurs at asparagine 45. 4 disulfide bridges follow: cysteine 95–cysteine 101, cysteine 98–cysteine 160, cysteine 133–cysteine 141, and cysteine 173–cysteine 176. Asparagine 106 is a glycosylation site (N-linked (GlcNAc...) asparagine). Residue asparagine 149 is glycosylated (N-linked (GlcNAc...) asparagine). N-linked (GlcNAc...) asparagine glycosylation is found at asparagine 203 and asparagine 359. 2 disulfides stabilise this stretch: cysteine 299/cysteine 364 and cysteine 386/cysteine 398. Asparagine 400 and asparagine 406 each carry an N-linked (GlcNAc...) asparagine glycan. 4 disulfide bridges follow: cysteine 521–cysteine 539, cysteine 527–cysteine 562, cysteine 530–cysteine 546, and cysteine 542–cysteine 552. IPT/TIG domains lie at 564-656 (PTIY…FSYV), 658-740 (PIIT…FIYR), and 743-837 (PIVY…LIYV). O-linked (Man) threonine glycosylation is present at threonine 583. N-linked (GlcNAc...) asparagine glycosylation is found at asparagine 608 and asparagine 636. O-linked (Man) threonine glycosylation is found at threonine 677 and threonine 762. Residues asparagine 786, asparagine 880, and asparagine 931 are each glycosylated (N-linked (GlcNAc...) asparagine). A helical transmembrane segment spans residues 934 to 956 (GLIVGVVSVSIILLLLLGLFLWL). Residues 957–1384 (KKRKQIKDLG…NVSGEDDDDT (428 aa)) are Cytoplasmic-facing. A Phosphoserine modification is found at serine 967. Residue threonine 978 is modified to Phosphothreonine. A phosphoserine mark is found at serine 991, serine 998, and serine 1001. Tyrosine 1004 is modified (phosphotyrosine). The Protein kinase domain maps to 1079-1346 (VHFNEVIGRG…RIAAIFSAFI (268 aa)). ATP contacts are provided by residues 1085–1093 (IGRGHFGCV) and lysine 1111. Aspartate 1205 (proton acceptor) is an active-site residue. The interval 1213 to 1382 (LDEKFTVKVA…QENVSGEDDD (170 aa)) is interaction with RANBP9. The residue at position 1231 (tyrosine 1231) is a Phosphotyrosine. A phosphotyrosine; by autocatalysis mark is found at tyrosine 1235 and tyrosine 1236. Threonine 1290 is modified (phosphothreonine). Residues 1321 to 1360 (WHPKAELRPSFSELVSRIAAIFSAFIGEHYVHVNATYVNV) form an interaction with MUC20 region. Tyrosine 1350 and tyrosine 1357 each carry phosphotyrosine; by autocatalysis. At tyrosine 1366 the chain carries Phosphotyrosine.

Belongs to the protein kinase superfamily. Tyr protein kinase family. As to quaternary structure, heterodimer made of an alpha chain (50 kDa) and a beta chain (145 kDa) which are disulfide linked. Binds PLXNB1. Interacts when phosphorylated with downstream effectors including STAT3, PIK3R1, SRC, PCLG1, GRB2 and GAB1. Interacts with SPSB1, SPSB2 and SPSB4. Interacts with INPP5D/SHIP1. When phosphorylated at Tyr-1357, interacts with INPPL1/SHIP2. Interacts with RANBP9 and RANBP10, as well as SPSB1, SPSB2, SPSB3 and SPSB4. SPSB1 binding occurs in the presence and in the absence of HGF, however HGF treatment has a positive effect on this interaction. Interacts with MUC20; prevents interaction with GRB2 and suppresses hepatocyte growth factor-induced cell proliferation. Interacts with GRB10. Interacts with PTPN1 and PTPN2. Interacts with HSP90AA1 and HSP90AB1; the interaction suppresses MET kinase activity. Interacts with tensin TNS3. Interacts (when phosphorylated) with tensin TNS4 (via SH2 domain); the interaction increases MET protein stability by inhibiting MET endocytosis and subsequent lysosomal degradation. In terms of processing, autophosphorylated in response to ligand binding on Tyr-1235 and Tyr-1236 in the kinase domain leading to further phosphorylation of Tyr-1350 and Tyr-1357 in the C-terminal multifunctional docking site. Dephosphorylated by PTPRJ at Tyr-1350 and Tyr-1366. Dephosphorylated by PTPN1 and PTPN2. Ubiquitinated. Ubiquitination by CBL regulates the receptor stability and activity through proteasomal degradation. Post-translationally, O-mannosylation of IPT/TIG domains by TMEM260 is required for protein maturation. O-mannosylated residues are composed of single mannose glycans that are not elongated or modified.

It localises to the membrane. It carries out the reaction L-tyrosyl-[protein] + ATP = O-phospho-L-tyrosyl-[protein] + ADP + H(+). With respect to regulation, in its inactive state, the C-terminal tail interacts with the catalytic domain and inhibits the kinase activity. Upon ligand binding, the C-terminal tail is displaced and becomes phosphorylated, thus increasing the kinase activity. Receptor tyrosine kinase that transduces signals from the extracellular matrix into the cytoplasm by binding to hepatocyte growth factor/HGF ligand. Regulates many physiological processes including proliferation, scattering, morphogenesis and survival. Ligand binding at the cell surface induces autophosphorylation of MET on its intracellular domain that provides docking sites for downstream signaling molecules. Following activation by ligand, interacts with the PI3-kinase subunit PIK3R1, PLCG1, SRC, GRB2, STAT3 or the adapter GAB1. Recruitment of these downstream effectors by MET leads to the activation of several signaling cascades including the RAS-ERK, PI3 kinase-AKT, or PLCgamma-PKC. The RAS-ERK activation is associated with the morphogenetic effects while PI3K/AKT coordinates prosurvival effects. During embryonic development, MET signaling plays a role in gastrulation, development and migration of muscles and neuronal precursors, angiogenesis and kidney formation. In adults, participates in wound healing as well as organ regeneration and tissue remodeling. Also promotes differentiation and proliferation of hematopoietic cells. This chain is Hepatocyte growth factor receptor (MET), found in Ovis aries (Sheep).